A 95-amino-acid polypeptide reads, in one-letter code: Pyrimidine/purine nucleoside phosphorylase (95 aa).

Belongs to the nucleoside phosphorylase PpnP family.

The catalysed reaction is a purine D-ribonucleoside + phosphate = a purine nucleobase + alpha-D-ribose 1-phosphate. It carries out the reaction adenosine + phosphate = alpha-D-ribose 1-phosphate + adenine. It catalyses the reaction cytidine + phosphate = cytosine + alpha-D-ribose 1-phosphate. The enzyme catalyses guanosine + phosphate = alpha-D-ribose 1-phosphate + guanine. The catalysed reaction is inosine + phosphate = alpha-D-ribose 1-phosphate + hypoxanthine. It carries out the reaction thymidine + phosphate = 2-deoxy-alpha-D-ribose 1-phosphate + thymine. It catalyses the reaction uridine + phosphate = alpha-D-ribose 1-phosphate + uracil. The enzyme catalyses xanthosine + phosphate = alpha-D-ribose 1-phosphate + xanthine. Catalyzes the phosphorolysis of diverse nucleosides, yielding D-ribose 1-phosphate and the respective free bases. Can use uridine, adenosine, guanosine, cytidine, thymidine, inosine and xanthosine as substrates. Also catalyzes the reverse reactions. This Edwardsiella ictaluri (strain 93-146) protein is Pyrimidine/purine nucleoside phosphorylase.